Here is a 330-residue protein sequence, read N- to C-terminus: Malate dehydrogenase (330 aa).

NAD(+) is bound at residue 13–19; the sequence is GAAGQIG. R94 and R100 together coordinate substrate. Residues N107, Q114, and 131 to 133 each bind NAD(+); that span reads VGN. 2 residues coordinate substrate: N133 and R164. H189 functions as the Proton acceptor in the catalytic mechanism.

It belongs to the LDH/MDH superfamily. MDH type 2 family.

The enzyme catalyses (S)-malate + NAD(+) = oxaloacetate + NADH + H(+). Catalyzes the reversible oxidation of malate to oxaloacetate. The chain is Malate dehydrogenase from Deinococcus radiodurans (strain ATCC 13939 / DSM 20539 / JCM 16871 / CCUG 27074 / LMG 4051 / NBRC 15346 / NCIMB 9279 / VKM B-1422 / R1).